The primary structure comprises 647 residues: Putative lipase YDL109C (647 aa).

Ser274 serves as the catalytic Charge relay system. The disordered stretch occupies residues 502-523; it reads PPPSPTLYEGTAAKEGETRKTR. Residues 513-523 show a composition bias toward basic and acidic residues; sequence AAKEGETRKTR.

Belongs to the putative lipase ROG1 family.

Functionally, involved in lipid metabolism. In Saccharomyces cerevisiae (strain ATCC 204508 / S288c) (Baker's yeast), this protein is Putative lipase YDL109C.